The sequence spans 146 residues: MNIIAQLEAEQCAKIEAKRQLPKFQAGDTVRVMVRVTEGTRTRVQAYEGVCIARSGGGLNETFTVRKISYGEGVERVFPVYSPLIEGVELVRRGKVRRAKLYYLRGLRGKAARIAEKRVYRKKDEKVAERVQATAVTVDVAEQAAE.

This sequence belongs to the bacterial ribosomal protein bL19 family.

Functionally, this protein is located at the 30S-50S ribosomal subunit interface and may play a role in the structure and function of the aminoacyl-tRNA binding site. The protein is Large ribosomal subunit protein bL19 of Bartonella quintana (strain Toulouse) (Rochalimaea quintana).